Consider the following 1104-residue polypeptide: Translation initiation factor IF-2 (1104 aa).

2 disordered regions span residues 51 to 444 (SLLG…LAAQ) and 461 to 497 (LARP…RRRA). Low complexity-rich tracts occupy residues 60–119 (AKPA…KPQA) and 127–164 (ATPK…AAKP). Over residues 189–202 (APTPRPTPARPTPR) the composition is skewed to pro residues. Composition is skewed to low complexity over residues 203 to 215 (PAGA…PTPG), 227 to 246 (GAPS…KPGA), 311 to 336 (STTG…PAGM), and 366 to 396 (PTKA…SFRP). Over residues 406 to 420 (GRPDWDDSARLDALR) the composition is skewed to basic and acidic residues. Over residues 481–495 (MRKRKKETARQRQRR) the composition is skewed to basic residues. Residues 596 to 768 (RRPPVVTVMG…LLLVTEVEDL (173 aa)) enclose the tr-type G domain. The G1 stretch occupies residues 605–612 (GHVDHGKT). Residue 605 to 612 (GHVDHGKT) participates in GTP binding. Positions 630–634 (GITQH) are G2. The segment at 655–658 (DTPG) is G3. Residues 655–659 (DTPGH) and 709–712 (NKID) each bind GTP. The G4 stretch occupies residues 709–712 (NKID). Positions 745–747 (SAI) are G5.

The protein belongs to the TRAFAC class translation factor GTPase superfamily. Classic translation factor GTPase family. IF-2 subfamily.

It is found in the cytoplasm. In terms of biological role, one of the essential components for the initiation of protein synthesis. Protects formylmethionyl-tRNA from spontaneous hydrolysis and promotes its binding to the 30S ribosomal subunits. Also involved in the hydrolysis of GTP during the formation of the 70S ribosomal complex. The sequence is that of Translation initiation factor IF-2 from Synechococcus sp. (strain CC9605).